The following is a 362-amino-acid chain: MASSADREKSLETALAQIDRQFGKGSVMRLGSDERAPVAVIPTGSVALDVALGIGGLPRGRIVEIYGPESSGKTTLTLHAIANAQRAGGIAAFIDAEHALDPEYAKKLGVDIDALLVSQPDTGEQALEIADMLVRSGSIDLVVIDSVAALVPRAEIEGEMGDSHVGLQARLMSQALRKLTGGLNQTQTTMIFINQLREKIGVFFGSPETTAGGKALKFYASVRLDIRRIETLKDGTDAVGNRTRVKVVKNKMAPPFKQAEFDILYGTGISREGSLIDFGVEHEIVRKSGAWYTYDGDQLGQGKENSRKHLLNNPEIAAEIEQKIKVKLGLVKDPNAVADAPADSAPAPVAAVAPKASARKSA.

67 to 74 contacts ATP; the sequence is GPESSGKT. Over residues 337 to 356 the composition is skewed to low complexity; sequence VADAPADSAPAPVAAVAPKA. Positions 337-362 are disordered; the sequence is VADAPADSAPAPVAAVAPKASARKSA.

Belongs to the RecA family.

It is found in the cytoplasm. Can catalyze the hydrolysis of ATP in the presence of single-stranded DNA, the ATP-dependent uptake of single-stranded DNA by duplex DNA, and the ATP-dependent hybridization of homologous single-stranded DNAs. It interacts with LexA causing its activation and leading to its autocatalytic cleavage. In Clavibacter michiganensis subsp. michiganensis (strain NCPPB 382), this protein is Protein RecA.